The sequence spans 177 residues: uncharacterized protein (177 aa).

Positions 1 to 175 (MYKNPYGLEI…VFKSIFNSIL (175 aa)) constitute a Macro domain.

This is an uncharacterized protein from Saccharolobus solfataricus (strain ATCC 35092 / DSM 1617 / JCM 11322 / P2) (Sulfolobus solfataricus).